The sequence spans 120 residues: Immunoglobulin kappa variable 2-112 (120 aa).

Positions 1–20 are cleaved as a signal peptide; that stretch reads MRCSLQFLGVLMFWISGVSG. The framework-1 stretch occupies residues 21 to 43; it reads DIVITQDELSNPVTSGESVSISC. An intrachain disulfide couples C43 to C113. The complementarity-determining-1 stretch occupies residues 44–59; sequence RSSKSLLYKDGKTYLN. The segment at 60 to 74 is framework-2; that stretch reads WFLQRPGQSPQLLIY. The segment at 75 to 81 is complementarity-determining-2; sequence LMSTRAS. Positions 82–113 are framework-3; it reads GVSDRFSGSGSGTDFTLEISRVKAEDVGVYYC. Residues 114 to 120 are complementarity-determining-3; that stretch reads QQLVEYP.

This is Immunoglobulin kappa variable 2-112 from Mus musculus (Mouse).